The primary structure comprises 197 residues: Imidazoleglycerol-phosphate dehydratase (197 aa).

Belongs to the imidazoleglycerol-phosphate dehydratase family.

It localises to the cytoplasm. It carries out the reaction D-erythro-1-(imidazol-4-yl)glycerol 3-phosphate = 3-(imidazol-4-yl)-2-oxopropyl phosphate + H2O. It participates in amino-acid biosynthesis; L-histidine biosynthesis; L-histidine from 5-phospho-alpha-D-ribose 1-diphosphate: step 6/9. This is Imidazoleglycerol-phosphate dehydratase from Clostridium acetobutylicum (strain ATCC 824 / DSM 792 / JCM 1419 / IAM 19013 / LMG 5710 / NBRC 13948 / NRRL B-527 / VKM B-1787 / 2291 / W).